The chain runs to 209 residues: MVSSPCTQASSRTCSRILGLSLGTAALFAAGANVALLLPNWDVTYLLRGLLGRHAMLGTGLWGGGLMVLTAAILISLMGWRYGCFSKSGLCRSVLTALLSGGLALLGALICFVTSGVALKDGPFCMFDVSSFNQTQAWKYGYPFKDLHSRNYLYDRSLWNSVCLEPSAAVVWHVSLFSALLCISLLQLLLVVVHVINSLLGLFCSLCEK.

Topologically, residues 1–16 are cytoplasmic; that stretch reads MVSSPCTQASSRTCSR. A helical membrane pass occupies residues 17–37; the sequence is ILGLSLGTAALFAAGANVALL. Over 38–59 the chain is Extracellular; it reads LPNWDVTYLLRGLLGRHAMLGT. Residues 60–80 form a helical membrane-spanning segment; sequence GLWGGGLMVLTAAILISLMGW. The Cytoplasmic segment spans residues 81–93; sequence RYGCFSKSGLCRS. A helical membrane pass occupies residues 94–114; the sequence is VLTALLSGGLALLGALICFVT. Over 115–175 the chain is Extracellular; the sequence is SGVALKDGPF…PSAAVVWHVS (61 aa). N-linked (GlcNAc...) asparagine glycosylation is present at asparagine 133. A helical transmembrane segment spans residues 176-196; it reads LFSALLCISLLQLLLVVVHVI. The interval 186–196 is important for homodimerization; it reads LQLLLVVVHVI. Residues 197–209 are Cytoplasmic-facing; it reads NSLLGLFCSLCEK.

It belongs to the L6 tetraspanin family. In terms of assembly, may form homodimers and homooligomers. Interacts with integrins ITGAV and ITGB3. Interacts with components of members of the V0 complex of vacuolar(H+)-ATPase (V-ATPase), including ATP6V0B and ATP6V0D2; this interaction inhibits V1-V0 complex assembly. In adipose tissue, expressed by macrophages.

The protein localises to the lysosome membrane. The protein resides in the cytoplasm. It is found in the cytoskeleton. It localises to the cell projection. Its subcellular location is the filopodium. Negatively regulates vacuolar (H+)-ATPase (V-ATPase) activity by interacting with members of V-ATPase V0 complex and hence inhibiting V1-V0 complex assembly. Required for multinucleation during osteoclast differentiation. The polypeptide is Transmembrane 4 L6 family member 19 (TM4SF19) (Homo sapiens (Human)).